A 410-amino-acid chain; its full sequence is ATP phosphoribosyltransferase regulatory subunit (410 aa).

Belongs to the class-II aminoacyl-tRNA synthetase family. HisZ subfamily. Heteromultimer composed of HisG and HisZ subunits.

It localises to the cytoplasm. Its pathway is amino-acid biosynthesis; L-histidine biosynthesis; L-histidine from 5-phospho-alpha-D-ribose 1-diphosphate: step 1/9. Its function is as follows. Required for the first step of histidine biosynthesis. May allow the feedback regulation of ATP phosphoribosyltransferase activity by histidine. This is ATP phosphoribosyltransferase regulatory subunit from Synechococcus sp. (strain JA-3-3Ab) (Cyanobacteria bacterium Yellowstone A-Prime).